The following is a 378-amino-acid chain: tRNA-specific 2-thiouridylase MnmA (378 aa).

ATP contacts are provided by residues Ala-27–Ser-34 and Leu-53. The active-site Nucleophile is Cys-121. The cysteines at positions 121 and 218 are disulfide-linked. An ATP-binding site is contributed by Gly-145. Residues Arg-168 to Gln-170 are interaction with tRNA. Catalysis depends on Cys-218, which acts as the Cysteine persulfide intermediate.

It belongs to the MnmA/TRMU family.

The protein resides in the cytoplasm. The enzyme catalyses S-sulfanyl-L-cysteinyl-[protein] + uridine(34) in tRNA + AH2 + ATP = 2-thiouridine(34) in tRNA + L-cysteinyl-[protein] + A + AMP + diphosphate + H(+). Functionally, catalyzes the 2-thiolation of uridine at the wobble position (U34) of tRNA, leading to the formation of s(2)U34. The polypeptide is tRNA-specific 2-thiouridylase MnmA (Rhizorhabdus wittichii (strain DSM 6014 / CCUG 31198 / JCM 15750 / NBRC 105917 / EY 4224 / RW1) (Sphingomonas wittichii)).